The sequence spans 323 residues: tRNA U34 carboxymethyltransferase (323 aa).

Residues Lys91, Trp105, Lys110, Gly130, Asp152–Thr154, Ile181–Glu182, Met196, Tyr200, and Arg315 each bind carboxy-S-adenosyl-L-methionine.

The protein belongs to the class I-like SAM-binding methyltransferase superfamily. CmoB family. In terms of assembly, homotetramer.

It carries out the reaction carboxy-S-adenosyl-L-methionine + 5-hydroxyuridine(34) in tRNA = 5-carboxymethoxyuridine(34) in tRNA + S-adenosyl-L-homocysteine + H(+). In terms of biological role, catalyzes carboxymethyl transfer from carboxy-S-adenosyl-L-methionine (Cx-SAM) to 5-hydroxyuridine (ho5U) to form 5-carboxymethoxyuridine (cmo5U) at position 34 in tRNAs. The sequence is that of tRNA U34 carboxymethyltransferase from Escherichia coli O8 (strain IAI1).